Reading from the N-terminus, the 379-residue chain is UDP-4-amino-4-deoxy-L-arabinose--oxoglutarate aminotransferase (379 aa).

Lys-182 is subject to N6-(pyridoxal phosphate)lysine.

This sequence belongs to the DegT/DnrJ/EryC1 family. ArnB subfamily. As to quaternary structure, homodimer. Pyridoxal 5'-phosphate serves as cofactor.

It catalyses the reaction UDP-4-amino-4-deoxy-beta-L-arabinose + 2-oxoglutarate = UDP-beta-L-threo-pentopyranos-4-ulose + L-glutamate. The protein operates within nucleotide-sugar biosynthesis; UDP-4-deoxy-4-formamido-beta-L-arabinose biosynthesis; UDP-4-deoxy-4-formamido-beta-L-arabinose from UDP-alpha-D-glucuronate: step 2/3. It participates in bacterial outer membrane biogenesis; lipopolysaccharide biosynthesis. Catalyzes the conversion of UDP-4-keto-arabinose (UDP-Ara4O) to UDP-4-amino-4-deoxy-L-arabinose (UDP-L-Ara4N). The modified arabinose is attached to lipid A and is required for resistance to polymyxin and cationic antimicrobial peptides. In Klebsiella pneumoniae (strain 342), this protein is UDP-4-amino-4-deoxy-L-arabinose--oxoglutarate aminotransferase.